The sequence spans 166 residues: Ureidoglycolate lyase (166 aa).

Belongs to the ureidoglycolate lyase family. In terms of assembly, homodimer. Ni(2+) is required as a cofactor.

The enzyme catalyses (S)-ureidoglycolate = urea + glyoxylate. It participates in nitrogen metabolism; (S)-allantoin degradation. Functionally, catalyzes the catabolism of the allantoin degradation intermediate (S)-ureidoglycolate, generating urea and glyoxylate. Involved in the utilization of allantoin as nitrogen source. In Rhizobium leguminosarum bv. trifolii (strain WSM2304), this protein is Ureidoglycolate lyase.